The following is an 84-amino-acid chain: U2-theraphotoxin-Cg1b 1 (84 aa).

The first 21 residues, 1–21 (MKVSVLITLAVWGVMFLLTSA), serve as a signal peptide directing secretion. Positions 22–48 (QERGSDQMDSPAWLKSMERIFQSEERE) are excised as a propeptide. Intrachain disulfides connect Cys-49-Cys-63, Cys-56-Cys-68, and Cys-62-Cys-76.

It belongs to the neurotoxin 10 (Hwtx-1) family. 06 (F4b) subfamily. In terms of tissue distribution, expressed by the venom gland.

The protein localises to the secreted. Probable ion channel inhibitor. The sequence is that of U2-theraphotoxin-Cg1b 1 from Chilobrachys guangxiensis (Chinese earth tiger tarantula).